A 165-amino-acid chain; its full sequence is UPF0262 protein blr1257 (165 aa).

The protein belongs to the UPF0262 family.

The protein is UPF0262 protein blr1257 of Bradyrhizobium diazoefficiens (strain JCM 10833 / BCRC 13528 / IAM 13628 / NBRC 14792 / USDA 110).